A 179-amino-acid polypeptide reads, in one-letter code: MNNSIHATTIFAIRQNGHAAMAGDGQVTLGEQVIMKQTARKVRRLYDGKVLAGFAGSVADAFTLFEKFETKLQEFSGNLERAAVELAQEWRGDKQLRQLEAMLIVMDKNSILVVSGTGEVISPDDDLIAIGSGGNYALSAGRALKRHTEMSAKDIAYASLKVASEICVFTNDNIIVEEL.

The active site involves Thr-8. Na(+) is bound by residues Ser-164, Cys-167, and Thr-170.

It belongs to the peptidase T1B family. HslV subfamily. A double ring-shaped homohexamer of HslV is capped on each side by a ring-shaped HslU homohexamer. The assembly of the HslU/HslV complex is dependent on binding of ATP.

The protein resides in the cytoplasm. It catalyses the reaction ATP-dependent cleavage of peptide bonds with broad specificity.. Its activity is regulated as follows. Allosterically activated by HslU binding. Protease subunit of a proteasome-like degradation complex believed to be a general protein degrading machinery. The polypeptide is ATP-dependent protease subunit HslV (Staphylococcus carnosus (strain TM300)).